The chain runs to 606 residues: Scavenger receptor class A member 3 (606 aa).

Residues 1–56 (MKVRSAGGDGDALCVTEEDLAGDDEDMPTFPCTQKGRPGPRCSRCQKNLSLHTSVR) lie on the Cytoplasmic side of the membrane. Residues 57-77 (ILYLFLALLLVAVAVLASLVF) form a helical; Signal-anchor for type II membrane protein membrane-spanning segment. Topologically, residues 78–606 (RKVDSLSEDI…PGPPGSQSFY (529 aa)) are extracellular. 10 N-linked (GlcNAc...) asparagine glycosylation sites follow: Asn-115, Asn-182, Asn-224, Asn-257, Asn-313, Asn-337, Asn-365, Asn-400, Asn-430, and Asn-451. The disordered stretch occupies residues 454–606 (ILRGAPGPPG…PGPPGSQSFY (153 aa)). The Collagen-like 1 domain maps to 455–513 (LRGAPGPPGPRGFKGDMGVKGPVGGRGPKGDPGSLGPLGPQGPQGQPGEAGPVGERGPV). Residues 485 to 519 (DPGSLGPLGPQGPQGQPGEAGPVGERGPVGPRGFP) show a composition bias toward low complexity. Positions 526 to 535 (GSFGTGGPRG) are enriched in gly residues. In terms of domain architecture, Collagen-like 2 spans 544-603 (GPPGPEGPPGSPGPSGPQGKPGIAGKTGSPGQRGAMGPKGEPGIQGPPGLPGPPGPPGSQ). 2 stretches are compositionally biased toward pro residues: residues 545–558 (PPGPEGPPGSPGPS) and 591–600 (PGLPGPPGPP).

As to expression, expressed ubiquitously.

Its subcellular location is the endoplasmic reticulum membrane. It is found in the golgi apparatus membrane. In terms of biological role, seems to protect cells by scavenging oxidative molecules or harmful products of oxidation. This Homo sapiens (Human) protein is Scavenger receptor class A member 3 (SCARA3).